The primary structure comprises 474 residues: tRNA-2-methylthio-N(6)-dimethylallyladenosine synthase (474 aa).

The region spanning 3-120 (KKLHIKTWGC…LPEMINHVQG (118 aa)) is the MTTase N-terminal domain. Residues cysteine 12, cysteine 49, cysteine 83, cysteine 157, cysteine 161, and cysteine 164 each contribute to the [4Fe-4S] cluster site. A Radical SAM core domain is found at 143–375 (RAEGPTAFVS…QQRISQQAME (233 aa)). The 64-residue stretch at 378 to 441 (RKMVGTVQRV…ASSLRGILLR (64 aa)) folds into the TRAM domain.

The protein belongs to the methylthiotransferase family. MiaB subfamily. Monomer. Requires [4Fe-4S] cluster as cofactor.

It localises to the cytoplasm. The catalysed reaction is N(6)-dimethylallyladenosine(37) in tRNA + (sulfur carrier)-SH + AH2 + 2 S-adenosyl-L-methionine = 2-methylsulfanyl-N(6)-dimethylallyladenosine(37) in tRNA + (sulfur carrier)-H + 5'-deoxyadenosine + L-methionine + A + S-adenosyl-L-homocysteine + 2 H(+). In terms of biological role, catalyzes the methylthiolation of N6-(dimethylallyl)adenosine (i(6)A), leading to the formation of 2-methylthio-N6-(dimethylallyl)adenosine (ms(2)i(6)A) at position 37 in tRNAs that read codons beginning with uridine. The polypeptide is tRNA-2-methylthio-N(6)-dimethylallyladenosine synthase (Yersinia pestis bv. Antiqua (strain Antiqua)).